Consider the following 600-residue polypeptide: Zinc finger and BTB domain-containing protein 46 (600 aa).

Residues 31-99 form the BTB domain; the sequence is CDACVVVEGK…MYSAHLALTS (69 aa). Residues 173 to 222 form a disordered region; it reads RRTSPANSSGDSAIASCHEGGSSYGKEDQEPKADGPDDVSSQSLWPGDVG. Residues 197–207 are compositionally biased toward basic and acidic residues; sequence GKEDQEPKADG. Lys-229 participates in a covalent cross-link: Glycyl lysine isopeptide (Lys-Gly) (interchain with G-Cter in SUMO2). Ser-234 bears the Phosphoserine mark. The disordered stretch occupies residues 235–278; that stretch reads PSHYGGSELPSSKDTAIQNSLSEQGSGDGWQPTGRRKNRKNKET. The segment covering 243–259 has biased composition (polar residues); it reads LPSSKDTAIQNSLSEQG. C2H2-type zinc fingers lie at residues 418–436 and 446–468; these read FKCP…LKRH and YPCE…TLVH. Residues 513 to 600 are disordered; sequence LDHGGGGEGS…EPDKDFAWIS (88 aa). The span at 533–555 shows a compositional bias: acidic residues; sequence YLEDPDDPRGEAEEELVEDEDED. Basic and acidic residues-rich tracts occupy residues 556–574 and 591–600; these read VAKW…LLGD and EPDKDFAWIS.

Post-translationally, sumoylated. Desumoylation by DESI1 reverses transcriptional repression activity.

The protein localises to the nucleus. In terms of biological role, functions as a transcriptional repressor for PRDM1. In Mus musculus (Mouse), this protein is Zinc finger and BTB domain-containing protein 46 (Zbtb46).